A 310-amino-acid chain; its full sequence is Homoserine kinase (310 aa).

91-101 provides a ligand contact to ATP; the sequence is PIGSGLGSSAC.

This sequence belongs to the GHMP kinase family. Homoserine kinase subfamily.

It is found in the cytoplasm. It catalyses the reaction L-homoserine + ATP = O-phospho-L-homoserine + ADP + H(+). Its pathway is amino-acid biosynthesis; L-threonine biosynthesis; L-threonine from L-aspartate: step 4/5. In terms of biological role, catalyzes the ATP-dependent phosphorylation of L-homoserine to L-homoserine phosphate. In Escherichia coli O81 (strain ED1a), this protein is Homoserine kinase.